A 226-amino-acid chain; its full sequence is Gap junction beta-2 protein (226 aa).

Residues 2-13 (DWGTLQTILGGV) lie within the membrane without spanning it. The Cytoplasmic portion of the chain corresponds to 14-20 (NKHSTSI). A helical transmembrane segment spans residues 21 to 40 (GKIWLTVLFIFRIMILVVAA). Residues 41-73 (KEVWGDEQADFVCNTLQPGCKNVCYDHYFPISH) are Extracellular-facing. Ca(2+) contacts are provided by glutamate 42, glycine 45, and glutamate 47. Intrachain disulfides connect cysteine 53-cysteine 180, cysteine 60-cysteine 174, and cysteine 64-cysteine 169. A helical membrane pass occupies residues 74 to 94 (IRLWALQLIFVSTPALLVAMH). Topologically, residues 95 to 135 (VAYRRHEKKRKFIKGEIKSEFKDIEEIKTQKVRIEGSLWWT) are cytoplasmic. The helical transmembrane segment at 136–156 (YTSSIFFRVIFEAAFMYVFYV) threads the bilayer. The Extracellular segment spans residues 157–189 (MYDGFSMQRLVKCNAWPCPNTVDCFVSRPTEKT). The chain crosses the membrane as a helical span at residues 190-210 (VFTVFMIAVSGICILLNVTEL). Over 211 to 226 (CYLLIRYCSGKSKKPV) the chain is Cytoplasmic.

It belongs to the connexin family. Beta-type (group I) subfamily. As to quaternary structure, a hemichannel or connexon is composed of a hexamer of connexins. A functional gap junction is formed by the apposition of two hemichannels. Forms heteromeric channels with GJB4. Interacts with CNST.

Its subcellular location is the cell membrane. It localises to the cell junction. It is found in the gap junction. Functionally, structural component of gap junctions. Gap junctions are dodecameric channels that connect the cytoplasm of adjoining cells. They are formed by the docking of two hexameric hemichannels, one from each cell membrane. Small molecules and ions diffuse from one cell to a neighboring cell via the central pore. The polypeptide is Gap junction beta-2 protein (GJB2) (Gorilla gorilla gorilla (Western lowland gorilla)).